The chain runs to 713 residues: MFNTHKVEIEWGGRPLTLETGKIARQADGAVLATYGETVVLATVVSAKEPKPGQDFFPLTVNYQEKTYAAGKIPGGYFKREGRPSENETLVSRLIDRPIRPLFVEGYKNDTQVVLTVVQHDLENNPDVLSMVAASAALTISGVPFMGPIGGARVGYINGEYVLNPNIDEMPESKLDLVVAGTADAVLMVESEAQELSEEVMLGAVVFGQKGFQPVIDAIIKLAEVAAKEPRDFQPEDLSDLEAKMLAVVENDLRDAYKITEKQARYVAVDAAKAKAKAHFFPEGVEEPEFSAEKFATVFKHLQAKIVRWNILDTGSRIDGRDLKTVRAIVSEVGLLPRTHGSALFTRGETQAIVVATLGTGEDEQMIDALTGTYKESFMLHYNFPPYSVGETGRMGSPGRREVGHGKLAWRAIHPMLPAADQFPYTIRSVSEITESNGSSSMATVCGTSLALMDAGVPLARPVAGIAMGLIKEGERFAVLSDILGDEDHLGDMDFKVAGTDNGITALQMDIKIDGITEEIMKVALEQAKGGRVHILGEMAKALSTSREELGEFAPRIEVMNIPTDKIRDVIGSGGKVIREIVEKTGAKINIEDDGTVKIASSNGKEIEAAKKWIHSIVAEPEVGEIYEGTVVKTADFGAFVNFFGPRDGLVHISQLASDRVAKTTDVVKEGQKVWVKLMGFDERGKVRLSMKVVDQETGKEVVAEKKAEADAE.

Residues aspartate 488 and aspartate 494 each coordinate Mg(2+). In terms of domain architecture, KH spans 555–614 (PRIEVMNIPTDKIRDVIGSGGKVIREIVEKTGAKINIEDDGTVKIASSNGKEIEAAKKWI). Residues 624 to 692 (GEIYEGTVVK…ERGKVRLSMK (69 aa)) form the S1 motif domain.

This sequence belongs to the polyribonucleotide nucleotidyltransferase family. It depends on Mg(2+) as a cofactor.

The protein resides in the cytoplasm. It catalyses the reaction RNA(n+1) + phosphate = RNA(n) + a ribonucleoside 5'-diphosphate. Involved in mRNA degradation. Catalyzes the phosphorolysis of single-stranded polyribonucleotides processively in the 3'- to 5'-direction. The sequence is that of Polyribonucleotide nucleotidyltransferase from Brucella anthropi (strain ATCC 49188 / DSM 6882 / CCUG 24695 / JCM 21032 / LMG 3331 / NBRC 15819 / NCTC 12168 / Alc 37) (Ochrobactrum anthropi).